Here is a 142-residue protein sequence, read N- to C-terminus: Nucleoside diphosphate kinase (142 aa).

Lysine 11, phenylalanine 59, arginine 87, threonine 93, arginine 104, and asparagine 114 together coordinate ATP. Histidine 117 acts as the Pros-phosphohistidine intermediate in catalysis.

Belongs to the NDK family. In terms of assembly, homotetramer. Mg(2+) is required as a cofactor.

It localises to the cytoplasm. The catalysed reaction is a 2'-deoxyribonucleoside 5'-diphosphate + ATP = a 2'-deoxyribonucleoside 5'-triphosphate + ADP. The enzyme catalyses a ribonucleoside 5'-diphosphate + ATP = a ribonucleoside 5'-triphosphate + ADP. Major role in the synthesis of nucleoside triphosphates other than ATP. The ATP gamma phosphate is transferred to the NDP beta phosphate via a ping-pong mechanism, using a phosphorylated active-site intermediate. This Marinobacter nauticus (strain ATCC 700491 / DSM 11845 / VT8) (Marinobacter aquaeolei) protein is Nucleoside diphosphate kinase.